The chain runs to 241 residues: Ribonuclease PH (241 aa).

Residues arginine 89 and 127–129 each bind phosphate; that span reads GTR.

This sequence belongs to the RNase PH family. In terms of assembly, homohexameric ring arranged as a trimer of dimers.

The catalysed reaction is tRNA(n+1) + phosphate = tRNA(n) + a ribonucleoside 5'-diphosphate. Its function is as follows. Phosphorolytic 3'-5' exoribonuclease that plays an important role in tRNA 3'-end maturation. Removes nucleotide residues following the 3'-CCA terminus of tRNAs; can also add nucleotides to the ends of RNA molecules by using nucleoside diphosphates as substrates, but this may not be physiologically important. Probably plays a role in initiation of 16S rRNA degradation (leading to ribosome degradation) during starvation. This is Ribonuclease PH from Xylella fastidiosa (strain 9a5c).